A 352-amino-acid polypeptide reads, in one-letter code: C-C chemokine receptor type 5 (352 aa).

At 1–30 (MDYQVSSPTYDIDYYTSEPCQKINVKQIAA) the chain is on the extracellular side. Tyrosine 3 carries the post-translational modification Sulfotyrosine. Residues serine 6 and serine 7 are each glycosylated (O-linked (GalNAc...) serine). Sulfotyrosine is present on residues tyrosine 10, tyrosine 14, and tyrosine 15. Disulfide bonds link cysteine 20/cysteine 269 and cysteine 101/cysteine 178. Residues 31-58 (RLLPPLYSLVFIFGFVGNILVVLILINC) traverse the membrane as a helical segment. Topologically, residues 59–68 (KRLKSMTDIY) are cytoplasmic. The chain crosses the membrane as a helical span at residues 69–89 (LLNLAISDLLFLLTVPFWAHY). Residues 90–102 (AAAQWDFGNTMCQ) lie on the Extracellular side of the membrane. The helical transmembrane segment at 103-124 (LLTGLYFIGFFSGIFFIILLTI) threads the bilayer. The Cytoplasmic portion of the chain corresponds to 125–141 (DRYLAIVHAVFALKART). A helical membrane pass occupies residues 142–166 (VTFGVVTSVITWVVAVFASLPRIIF). Residues 167-198 (TRSQREGLHYACSSHFPYSQYQFWKNFQTLKI) are Extracellular-facing. The helical transmembrane segment at 199-218 (VILGLVLPLLVMVICYSGIL) threads the bilayer. The Cytoplasmic portion of the chain corresponds to 219–235 (KTLLRCRNEKKRHRAVR). Residues 236–260 (LIFTIMIVYFLFWAPYNIVLLLNTF) form a helical membrane-spanning segment. At 261–277 (QEFFGLNNCSSSNRLDQ) the chain is on the extracellular side. The chain crosses the membrane as a helical span at residues 278–301 (AMQVTETLGMTHCCINPIIYAFVG). Over 302-352 (EKFRNYLLVFFQKHIAKRFCKCCSIFQQEAPERASSVYTRSTGEQEISVGL) the chain is Cytoplasmic. Residues cysteine 321, cysteine 323, and cysteine 324 are each lipidated (S-palmitoyl cysteine). Phosphoserine; by BARK1 occurs at positions 336, 337, 342, and 349.

This sequence belongs to the G-protein coupled receptor 1 family. Interacts with PRAF2. Efficient ligand binding to CCL3/MIP-1alpha and CCL4/MIP-1beta requires sulfation, O-glycosylation and sialic acid modifications. Glycosylation on Ser-6 is required for efficient binding of CCL4. Interacts with GRK2. Interacts with ARRB1 and ARRB2. Interacts with CNIH4. Interacts with S100A4; this interaction stimulates T-lymphocyte chemotaxis. Sulfated on at least 2 of the N-terminal tyrosines. Sulfation is required for efficient binding of the chemokines, CCL3 and CCL4. In terms of processing, palmitoylation in the C-terminal is important for cell surface expression. Post-translationally, phosphorylation on serine residues in the C-terminal is stimulated by binding CC chemokines especially by APO-RANTES. O-glycosylated, but not N-glycosylated. Ser-6 appears to be the major site even if Ser-7 may be also O-glycosylated. Also sialylated glycans present which contribute to chemokine binding. Thr-16 and Ser-17 may also be glycosylated and, if so, with small moieties such as a T-antigen.

It localises to the cell membrane. In terms of biological role, receptor for a number of inflammatory CC-chemokines including CCL3/MIP-1-alpha, CCL4/MIP-1-beta and RANTES and subsequently transduces a signal by increasing the intracellular calcium ion level. May play a role in the control of granulocytic lineage proliferation or differentiation. Participates in T-lymphocyte migration to the infection site by acting as a chemotactic receptor. The sequence is that of C-C chemokine receptor type 5 (CCR5) from Chlorocebus pygerythrus (Vervet monkey).